A 52-amino-acid polypeptide reads, in one-letter code: Large ribosomal subunit protein bL33 (52 aa).

The protein belongs to the bacterial ribosomal protein bL33 family.

The protein is Large ribosomal subunit protein bL33 of Anaeromyxobacter sp. (strain Fw109-5).